The primary structure comprises 435 residues: Membrane-bound ghrelin O-acyltransferase MBOAT4 (435 aa).

The Lumenal segment spans residues 1 to 5; sequence MDWLQ. The chain crosses the membrane as a helical span at residues 6–26; it reads LFFLHPLSFYQGAAFPFALLF. The Cytoplasmic segment spans residues 27 to 40; that stretch reads NYLCILDTFSTRAR. A helical membrane pass occupies residues 41–56; that stretch reads YLFLLAGGGVLAFAAM. Residues 57–59 lie on the Lumenal side of the membrane; it reads GPY. Residues 60–76 form a helical membrane-spanning segment; sequence SLLIFIPALCAVALVSF. Over 77-82 the chain is Cytoplasmic; sequence LSPQEV. A helical transmembrane segment spans residues 83 to 101; it reads HRLTFFFQMGWQTLCHLGL. Residues 102–120 lie on the Lumenal side of the membrane; the sequence is HYTEYYLGEPPPVRFYITL. The helical transmembrane segment at 121 to 136 threads the bilayer; the sequence is SSLMLLTQRVTSLSLD. The Cytoplasmic portion of the chain corresponds to 137–206; sequence ICEGKVEAPR…YPSISFRALT (70 aa). A helical membrane pass occupies residues 207 to 227; sequence WRGLQILGLECLKVALRSAVS. Over 228 to 240 the chain is Lumenal; it reads AGAGLDDCQRLEC. Residues 241–261 traverse the membrane as a helical segment; sequence IYLMWSTAWLFKLTYYSHWIL. The Cytoplasmic portion of the chain corresponds to 262-324; that stretch reads DDSLLHAAGF…RRLVFRKSRR (63 aa). Active-site residues include Asn307 and His338. The helical transmembrane segment at 325–338 threads the bilayer; the sequence is WPLLQTFAFSAWWH. Residues 339-340 are Lumenal-facing; it reads GL. A helical membrane pass occupies residues 341–357; it reads HPGQVFGFLCWSVMVKA. At 358 to 376 the chain is on the cytoplasmic side; it reads DYLIHTFANVCIRSWPLRL. Residues 377–397 traverse the membrane as a helical segment; the sequence is LYRALTWAHTQLIIAYIMLAV. Residues 398-407 lie on the Lumenal side of the membrane; sequence EGRSLSSLCQ. Residues 408–428 form a helical membrane-spanning segment; that stretch reads LCCSYNSLFPVMYGLLLFLLA. Over 429–435 the chain is Cytoplasmic; sequence ERKDKRN.

The protein belongs to the membrane-bound acyltransferase family. Monomer. Post-translationally, not glycosylated. In terms of tissue distribution, highly expressed in stomach and pancreas. Lower expression in small intestine and colon. Very low expression in testis.

Its subcellular location is the endoplasmic reticulum membrane. The catalysed reaction is octanoyl-CoA + L-seryl-[protein] = O-octanoyl-L-seryl-[protein] + CoA. It carries out the reaction hexanoyl-CoA + L-seryl-[protein] = O-hexanoyl-L-seryl-[protein] + CoA. The enzyme catalyses decanoyl-CoA + L-seryl-[protein] = O-decanoyl-L-seryl-[protein] + CoA. It catalyses the reaction L-seryl-[protein] + acetyl-CoA = O-acetyl-L-seryl-[protein] + CoA. The catalysed reaction is L-seryl-[protein] + butanoyl-CoA = O-butanoyl-L-seryl-[protein] + CoA. It carries out the reaction pentanoyl-CoA + L-seryl-[protein] = O-pentanoyl-L-seryl-[protein] + CoA. The enzyme catalyses heptanoyl-CoA + L-seryl-[protein] = O-heptanoyl-L-seryl-[protein] + CoA. It catalyses the reaction nonanoyl-CoA + L-seryl-[protein] = O-nonanoyl-L-seryl-[protein] + CoA. The catalysed reaction is L-seryl-[protein] + dodecanoyl-CoA = O-dodecanoyl-L-seryl-[protein] + CoA. It carries out the reaction L-seryl-[protein] + tetradecanoyl-CoA = O-tetradecanoyl-L-seryl-[protein] + CoA. The enzyme catalyses a fatty acyl-CoA + L-seryl-[protein] = O-fatty acyl-L-seryl-[protein] + CoA. Inhibited by 1-[2-cyano-3,12-dioxooleana-1,9(11)- dien-28-oyl]ethylamide (CDDO-EA) with an IC(50) of 60 uM. Inhibited by Fe3+ and Cu2+ and the O-acyltransferase activity is completely blocked over 5 mM Fe3+ and 0.5 mM Cu2+. Catalyzes ghrelin acylation at 'Ser-3' using preferentially octanoyl-CoA, hexanoyl-CoA and decanoyl-CoA as acyl-CoA donors leading to ghrelin activity. In vitro also uses acyl-CoA donors of different lengths from short-chain (C2) to long-chain fatty acids (C16) knowing that acyl-CoA donors from butanoyl-CoA (C4) to dodecanoyl-CoA (C12) are more efficient compared to longer acyl-CoA donors, such as myristoyl-CoA (C14) and palmitoyl-CoA (C16) that are not efficient. Functionally, inactive octanoyltransferase activity. The chain is Membrane-bound ghrelin O-acyltransferase MBOAT4 from Mus musculus (Mouse).